Consider the following 170-residue polypeptide: Zinc finger matrin-type protein 5 (170 aa).

The segment at 51-79 (EQNKRPCRKFLLTGQCDFGSNCRFSHMSE) adopts a C3H1-type zinc-finger fold. A disordered region spans residues 150 to 170 (PPSLRAPPPGGWPLQPSVQWG).

In terms of assembly, component of the U11/U12 snRNPs that are part of the U12-type spliceosome.

Its subcellular location is the nucleus. This is Zinc finger matrin-type protein 5 (ZMAT5) from Bos taurus (Bovine).